A 506-amino-acid polypeptide reads, in one-letter code: BTB/POZ domain-containing protein 16 (506 aa).

The BTB domain maps to I150–L206.

The protein is BTB/POZ domain-containing protein 16 (Btbd16) of Rattus norvegicus (Rat).